A 150-amino-acid chain; its full sequence is 3-dehydroquinate dehydratase (150 aa).

Y26 acts as the Proton acceptor in catalysis. Residues N77, H83, and D90 each contribute to the substrate site. H103 acts as the Proton donor in catalysis. Substrate is bound by residues 104–105 (LS) and R114.

The protein belongs to the type-II 3-dehydroquinase family. Homododecamer.

It carries out the reaction 3-dehydroquinate = 3-dehydroshikimate + H2O. It functions in the pathway metabolic intermediate biosynthesis; chorismate biosynthesis; chorismate from D-erythrose 4-phosphate and phosphoenolpyruvate: step 3/7. Catalyzes a trans-dehydration via an enolate intermediate. This chain is 3-dehydroquinate dehydratase, found in Pectobacterium atrosepticum (strain SCRI 1043 / ATCC BAA-672) (Erwinia carotovora subsp. atroseptica).